The sequence spans 150 residues: uncharacterized protein (150 aa).

The 62-residue stretch at 5–66 folds into the HTH asnC-type domain; that stretch reads LDKVDRRLLE…KPNYKKLNLG (62 aa). Residues 24–43 constitute a DNA-binding region (H-T-H motif); it reads IATLSKKLGIPRTTVHYRIK.

This is an uncharacterized protein from Pyrococcus abyssi (strain GE5 / Orsay).